The primary structure comprises 1164 residues: Receptor-like protein kinase BRI1-like 3 (1164 aa).

An N-terminal signal peptide occupies residues 1–23; that stretch reads MKQQWQFLILCLLVLFLTVDSRG. Residues 24–772 lie on the Extracellular side of the membrane; that stretch reads RRLLSDDVND…RSHAHPKKQS (749 aa). An N-linked (GlcNAc...) asparagine glycan is attached at Asn32. The Cys pair 1 motif lies at 65–72; sequence CTWRGVSC. LRR repeat units follow at residues 77-98, 102-123, 125-146, 151-173, 176-197, 202-224, 227-248, 252-274, 278-300, 303-325, 327-347, 352-375, 376-397, 403-424, 427-448, 451-473, 476-498, 500-523, 524-546, and 548-570; these read RVIG…NNLT, NLRS…SSSG, SLEV…DYVF, NLVS…PSAS, RITT…TFIA, SLKH…SFGL, NLTV…VSLS, LLET…DYWG, NLRQ…LSLL, TLEV…FTSC, SLQS…STVV, RITN…TNCS, NLRV…GFCS, VLEK…ELGK, SLKT…EIWT, KLSD…ICVD, NLET…ISKC, NMLW…GKLE, KLAI…LGNC, and NLIW…LASQ. Asn96 and Asn112 each carry an N-linked (GlcNAc...) asparagine glycan. N-linked (GlcNAc...) asparagine glycosylation occurs at Asn156. N-linked (GlcNAc...) asparagine glycans are attached at residues Asn212, Asn227, and Asn257. Asn362 and Asn373 each carry an N-linked (GlcNAc...) asparagine glycan. N-linked (GlcNAc...) asparagine glycosylation occurs at Asn461. N-linked (GlcNAc...) asparagine glycosylation is found at Asn532, Asn558, and Asn638. LRR repeat units lie at residues 640 to 662, 664 to 686, 688 to 711, and 712 to 734; these read SMIY…YGAM, YLQV…FGGL, AIGV…GGLS, and FLSD…GQLT. N-linked (GlcNAc...) asparagine glycosylation is found at Asn722 and Asn743. The Cys pair 2 motif lies at 748-755; it reads CGVPLPPC. A helical transmembrane segment spans residues 773–793; it reads IATGMSAGIVFSFMCIVMLIM. At 794–1164 the chain is on the cytoplasmic side; sequence ALYRARKVQK…LVEESRDKEP (371 aa). Residues Thr847 and Thr855 each carry the phosphothreonine modification. In terms of domain architecture, Protein kinase spans 858–1136; it reads FSADSMIGSG…QVMTMFKELV (279 aa). Residues 864-872 and Lys886 each bind ATP; that span reads IGSGGFGDV. Tyr931 is modified (phosphotyrosine). The active-site Proton acceptor is the Asp985. The residue at position 1020 (Ser1020) is a Phosphoserine. A Phosphotyrosine modification is found at Tyr1028.

The protein belongs to the protein kinase superfamily. Ser/Thr protein kinase family. In terms of processing, autophosphorylated on Tyr and Thr residues. As to expression, predominantly expressed in vascular tissues. Expressed only during postembryonic development with a very discrete pattern of expression, preferentially in the two protophloem cell files at the elongation zone of the root. The expression in these two cell files attenuates as the phloem cells differentiate in the upper root. In cotyledons and leaves, it is expressed in phloem cells, starting at the cotyledons and shoot apex, moving toward the basal part of the leaves, where the expression is weak. Expressed in the secondary and tertiary veins and in the upper part of the cotyledons and leaves. Weakly or not expressed in the inflorescence stems. Has some complementary expression with BRL1.

It is found in the cell membrane. The catalysed reaction is L-seryl-[protein] + ATP = O-phospho-L-seryl-[protein] + ADP + H(+). It carries out the reaction L-threonyl-[protein] + ATP = O-phospho-L-threonyl-[protein] + ADP + H(+). The enzyme catalyses L-tyrosyl-[protein] + ATP = O-phospho-L-tyrosyl-[protein] + ADP + H(+). Receptor with a dual specificity kinase activity acting on both serine/threonine- and tyrosine-containing substrates. Binds brassinolide. Regulates, in response to brassinosteroid binding, a signaling cascade involved in plant development. May be involved in cell growth and vascular differentiation. In Arabidopsis thaliana (Mouse-ear cress), this protein is Receptor-like protein kinase BRI1-like 3 (BRL3).